We begin with the raw amino-acid sequence, 360 residues long: Protein Wnt-2 (360 aa).

The signal sequence occupies residues 1 to 25 (MNAPLGGIWLWLPLLLTWLSPEVSS). Intrachain disulfides connect C76–C87, C127–C135, C137–C157, C206–C220, C208–C215, C278–C309, C294–C304, C308–C348, C324–C339, C326–C336, and C331–C332. S212 carries O-palmitoleoyl serine; by PORCN lipidation. A glycan (N-linked (GlcNAc...) asparagine) is linked at N295.

This sequence belongs to the Wnt family. In terms of processing, palmitoleoylation is required for efficient binding to frizzled receptors. Depalmitoleoylation leads to Wnt signaling pathway inhibition.

It is found in the secreted. The protein resides in the extracellular space. Its subcellular location is the extracellular matrix. Ligand for members of the frizzled family of seven transmembrane receptors. Probable developmental protein. May be a signaling molecule which affects the development of discrete regions of tissues. Is likely to signal over only few cell diameters. The protein is Protein Wnt-2 (WNT2) of Carollia perspicillata (Seba's short-tailed bat).